A 231-amino-acid polypeptide reads, in one-letter code: Acyltransferase PGAP2 (231 aa).

At 1-22 the chain is on the cytoplasmic side; the sequence is MQQVPYGSVDRDKPLIRVPFTR. The chain crosses the membrane as a helical span at residues 23 to 43; the sequence is LAVITVCLPLLGLVACIVLAM. Residues 44–78 lie on the Lumenal side of the membrane; sequence LYHYNDATYTHCQVPNYLPSISAAISLTPERYIWR. A helical transmembrane segment spans residues 79–99; that stretch reads FSIGLHSAPRFLVAAAYLSFY. The Cytoplasmic portion of the chain corresponds to 100-110; that stretch reads RGRFSRRLTEQ. A helical membrane pass occupies residues 111 to 131; the sequence is LLSGFTFLLALSENVGLLLLT. Residues 132–146 lie on the Lumenal side of the membrane; it reads YVSSTETYSVHKSGF. Residues 147–167 traverse the membrane as a helical segment; it reads ILFIGSSLFHMLCTCKLWSLI. Topologically, residues 168-179 are cytoplasmic; the sequence is VKYSISSEEMMS. The helical transmembrane segment at 180 to 200 threads the bilayer; sequence YWFKLRLFLFNGGCCVLAVYF. Residues 201–231 lie on the Lumenal side of the membrane; the sequence is YRRHNTYCEEGITHASRCVSIWWCCPTWPST.

Belongs to the PGAP2 family.

The protein localises to the golgi apparatus membrane. Functionally, involved in the fatty acid remodeling steps of GPI-anchor maturation where the unsaturated acyl chain at sn-2 of inositol phosphate is replaced by a saturated stearoyl chain. May catalyze the second step of the fatty acid remodeling, by reacylating a lyso-GPI intermediate at sn-2 of inositol phosphate by a saturated chain. The fatty acid remodeling steps is critical for the integration of GPI-APs into lipid rafts. This Danio rerio (Zebrafish) protein is Acyltransferase PGAP2.